The chain runs to 360 residues: tRNA (guanine-N(7)-)-methyltransferase (360 aa).

Positions 1–32 (MTPPPPKRQKRDEYRKATAEAASQPGPSDVAE) are disordered. S-adenosyl-L-methionine-binding positions include G99 and 122–123 (EI). Residues 177 to 196 (ADAASPVLSTDTEHTPTTLV) are disordered. Over residues 183-196 (VLSTDTEHTPTTLV) the composition is skewed to polar residues. Residues 209 to 210 (NT) and C229 contribute to the S-adenosyl-L-methionine site. The active site involves D232. 332–334 (TEE) provides a ligand contact to S-adenosyl-L-methionine.

It belongs to the class I-like SAM-binding methyltransferase superfamily. TrmB family. In terms of assembly, forms a complex with trm82.

Its subcellular location is the nucleus. The catalysed reaction is guanosine(46) in tRNA + S-adenosyl-L-methionine = N(7)-methylguanosine(46) in tRNA + S-adenosyl-L-homocysteine. Its pathway is tRNA modification; N(7)-methylguanine-tRNA biosynthesis. Its function is as follows. Catalyzes the formation of N(7)-methylguanine at position 46 (m7G46) in tRNA. This Neosartorya fischeri (strain ATCC 1020 / DSM 3700 / CBS 544.65 / FGSC A1164 / JCM 1740 / NRRL 181 / WB 181) (Aspergillus fischerianus) protein is tRNA (guanine-N(7)-)-methyltransferase (trm8).